A 441-amino-acid chain; its full sequence is Malate dehydrogenase [NADP], chloroplastic (441 aa).

Residues 1–58 constitute a chloroplast transit peptide; the sequence is MALTQLNSTCSKPQLHSSSQLSFLSRTRTRTLPRHYHSTFAPLHRTQHARISCSVAPN. The cysteines at positions 76 and 81 are disulfide-linked. 105–111 contacts NADP(+); the sequence is GAAGMIS. Substrate contacts are provided by arginine 186 and arginine 192. Residue asparagine 199 coordinates NADP(+). Glutamine 206 contributes to the NAD(+) binding site. 223-225 is a binding site for NADP(+); sequence VGN. The substrate site is built by asparagine 225 and arginine 256. Histidine 281 acts as the Proton acceptor in catalysis. An intrachain disulfide couples cysteine 417 to cysteine 429.

The protein belongs to the LDH/MDH superfamily. MDH type 2 family. Homodimer.

The protein resides in the plastid. Its subcellular location is the chloroplast. The enzyme catalyses (S)-malate + NADP(+) = oxaloacetate + NADPH + H(+). Chloroplast NADP-MDH is activated upon illumination. In order to be enzymatically active, disulfide bridges on the protein must be reduced by thioredoxin which receives electrons from ferredoxin and the electron transport system of photosynthesis. Functionally, the chloroplastic, NADP-dependent form is essential for the photosynthesis C4 cycle, which allows plants to circumvent the problem of photorespiration. In C4 plants, NADP-MDH activity acts to convert oxaloacetate to malate in chloroplasts of mesophyll cells for transport to the bundle sheath cells. The sequence is that of Malate dehydrogenase [NADP], chloroplastic from Pisum sativum (Garden pea).